Here is a 138-residue protein sequence, read N- to C-terminus: Large ribosomal subunit protein bL19 (138 aa).

This sequence belongs to the bacterial ribosomal protein bL19 family.

Functionally, this protein is located at the 30S-50S ribosomal subunit interface and may play a role in the structure and function of the aminoacyl-tRNA binding site. This is Large ribosomal subunit protein bL19 from Rickettsia peacockii (strain Rustic).